Consider the following 254-residue polypeptide: Gamma-glutamyl-gamma-aminobutyrate hydrolase (254 aa).

The region spanning 16-250 is the Glutamine amidotransferase type-1 domain; sequence RNRLKGHATQ…ITACQHHIAE (235 aa). Catalysis depends on Cys114, which acts as the Nucleophile. Residues His222 and Glu224 contribute to the active site.

This sequence belongs to the peptidase C26 family.

It carries out the reaction 4-(gamma-L-glutamylamino)butanoate + H2O = 4-aminobutanoate + L-glutamate. It participates in amine and polyamine degradation; putrescine degradation; 4-aminobutanoate from putrescine: step 4/4. Its function is as follows. Involved in the breakdown of putrescine via hydrolysis of the gamma-glutamyl linkage of gamma-glutamyl-gamma-aminobutyrate. The sequence is that of Gamma-glutamyl-gamma-aminobutyrate hydrolase (puuD) from Escherichia coli O157:H7.